The chain runs to 59 residues: MAVQQNKKSKSKKGMRRSHDRVAVPTIVYCACGEPTVPHRACPSCGTYKGRQVVAQPNE.

A disordered region spans residues 1-20 (MAVQQNKKSKSKKGMRRSHD). Positions 7 to 19 (KKSKSKKGMRRSH) are enriched in basic residues.

It belongs to the bacterial ribosomal protein bL32 family.

In Nitratidesulfovibrio vulgaris (strain DSM 19637 / Miyazaki F) (Desulfovibrio vulgaris), this protein is Large ribosomal subunit protein bL32.